The sequence spans 213 residues: MAVLSAPGLRGFRILGLRSSVGPAVQARSVHQSVATDGPSSTQPALPKARAVAPKPSSRGEYVVAKLDDLVNWARRSSLWPMTFGLACCAVEMMHMAAPRYDMDRFGVVFRASPRQSDVMIVAGTLTNKMAPALRKVYDQMPEPRYVVSMGSCANGGGYYHYSYSVVRGCDRIVPVDIYIPGCPPTAEALLYGILQLQRKIKRERRLQIWYRR.

A mitochondrion-targeting transit peptide spans 1–37 (MAVLSAPGLRGFRILGLRSSVGPAVQARSVHQSVATD). Positions 30 to 44 (VHQSVATDGPSSTQP) are enriched in polar residues. A disordered region spans residues 30–53 (VHQSVATDGPSSTQPALPKARAVA). Residues Cys88 and Cys89 each contribute to the [4Fe-4S] cluster site. A Hydroxyarginine modification is found at Arg111. The [4Fe-4S] cluster site is built by Cys153 and Cys183.

It belongs to the complex I 20 kDa subunit family. In terms of assembly, core subunit of respiratory chain NADH dehydrogenase (Complex I) which is composed of 45 different subunits. This is a component of the iron-sulfur (IP) fragment of the enzyme. [4Fe-4S] cluster serves as cofactor. In terms of processing, hydroxylated ar Arg-111 by NDUFAF5 early in the pathway of assembly of complex I, before the formation of the juncture between peripheral and membrane arms.

It localises to the mitochondrion inner membrane. It catalyses the reaction a ubiquinone + NADH + 5 H(+)(in) = a ubiquinol + NAD(+) + 4 H(+)(out). Functionally, core subunit of the mitochondrial membrane respiratory chain NADH dehydrogenase (Complex I) which catalyzes electron transfer from NADH through the respiratory chain, using ubiquinone as an electron acceptor. Essential for the catalytic activity of complex I. The chain is NADH dehydrogenase [ubiquinone] iron-sulfur protein 7, mitochondrial (NDUFS7) from Pan troglodytes (Chimpanzee).